The chain runs to 192 residues: Thymidine kinase (192 aa).

Residues 9-16 (SAMNAGKS) and 87-90 (DECQ) each bind ATP. Glutamate 88 acts as the Proton acceptor in catalysis. Cysteine 145, cysteine 147, cysteine 182, and histidine 185 together coordinate Zn(2+).

This sequence belongs to the thymidine kinase family. In terms of assembly, homotetramer.

It localises to the cytoplasm. It carries out the reaction thymidine + ATP = dTMP + ADP + H(+). The protein is Thymidine kinase of Aliivibrio fischeri (strain ATCC 700601 / ES114) (Vibrio fischeri).